The primary structure comprises 104 residues: Large ribosomal subunit protein bL21 (104 aa).

Belongs to the bacterial ribosomal protein bL21 family. In terms of assembly, part of the 50S ribosomal subunit. Contacts protein L20.

Functionally, this protein binds to 23S rRNA in the presence of protein L20. In Streptococcus agalactiae serotype Ia (strain ATCC 27591 / A909 / CDC SS700), this protein is Large ribosomal subunit protein bL21.